Reading from the N-terminus, the 366-residue chain is Histidinol-phosphate aminotransferase 2 (366 aa).

Residues 1–11 (MQVKDQLSSLQ) show a composition bias toward polar residues. Residues 1-21 (MQVKDQLSSLQPYKPGKSPEQ) form a disordered region. Lys222 carries the N6-(pyridoxal phosphate)lysine modification.

The protein belongs to the class-II pyridoxal-phosphate-dependent aminotransferase family. Histidinol-phosphate aminotransferase subfamily. In terms of assembly, homodimer. Pyridoxal 5'-phosphate serves as cofactor.

It catalyses the reaction L-histidinol phosphate + 2-oxoglutarate = 3-(imidazol-4-yl)-2-oxopropyl phosphate + L-glutamate. Its pathway is amino-acid biosynthesis; L-histidine biosynthesis; L-histidine from 5-phospho-alpha-D-ribose 1-diphosphate: step 7/9. This Bacillus anthracis protein is Histidinol-phosphate aminotransferase 2 (hisC2).